The chain runs to 194 residues: Peptidyl-tRNA hydrolase (194 aa).

Residue Tyr17 coordinates tRNA. The active-site Proton acceptor is the His22. Tyr68, Asn70, and Asn116 together coordinate tRNA.

This sequence belongs to the PTH family. Monomer.

It localises to the cytoplasm. The enzyme catalyses an N-acyl-L-alpha-aminoacyl-tRNA + H2O = an N-acyl-L-amino acid + a tRNA + H(+). In terms of biological role, hydrolyzes ribosome-free peptidyl-tRNAs (with 1 or more amino acids incorporated), which drop off the ribosome during protein synthesis, or as a result of ribosome stalling. Functionally, catalyzes the release of premature peptidyl moieties from peptidyl-tRNA molecules trapped in stalled 50S ribosomal subunits, and thus maintains levels of free tRNAs and 50S ribosomes. This Pseudomonas putida (strain GB-1) protein is Peptidyl-tRNA hydrolase.